Consider the following 125-residue polypeptide: Glycine cleavage system H protein (125 aa).

The 82-residue stretch at 22–103 (VFVVGITENA…AFTAWIFKIK (82 aa)) folds into the Lipoyl-binding domain. Lys63 is subject to N6-lipoyllysine.

It belongs to the GcvH family. In terms of assembly, the glycine cleavage system is composed of four proteins: P, T, L and H. Requires (R)-lipoate as cofactor.

In terms of biological role, the glycine cleavage system catalyzes the degradation of glycine. The H protein shuttles the methylamine group of glycine from the P protein to the T protein. This chain is Glycine cleavage system H protein, found in Bordetella avium (strain 197N).